We begin with the raw amino-acid sequence, 396 residues long: Cathepsin E (396 aa).

A signal peptide spans 1–19 (MKTLLLLLLVLLELGEAQG). The propeptide at 20–53 (SLHRVPLRRHPSLKKKLRARSQLSEFWKSHNLDM) is activation peptide. In terms of domain architecture, Peptidase A1 spans 78–396 (YFGTISIGSP…NRVGLAPAVP (319 aa)). Asparagine 90 carries an N-linked (GlcNAc...) asparagine glycan. Residue aspartate 96 is part of the active site. Disulfide bonds link cysteine 109–cysteine 114 and cysteine 272–cysteine 276. Residue aspartate 281 is part of the active site. Cysteine 314 and cysteine 351 are oxidised to a cystine.

It belongs to the peptidase A1 family. As to quaternary structure, homodimer; disulfide-linked. Glycosylated. The nature of the carbohydrate chain varies between cell types. In fibroblasts, the proenzyme contains a high mannose-type oligosaccharide, while the mature enzyme contains a complex-type oligosaccharide. In erythrocyte membranes, both the proenzyme and mature enzyme contain a complex-type oligosaccharide. Post-translationally, two forms are produced by autocatalytic cleavage, form I begins at Ile-54, form II begins at Thr-57. Expressed abundantly in the stomach, the Clara cells of the lung and activated B-lymphocytes, and at lower levels in lymph nodes, skin and spleen. Not expressed in resting B-lymphocytes.

It is found in the endosome. The catalysed reaction is Similar to cathepsin D, but slightly broader specificity.. In terms of biological role, may have a role in immune function. Probably involved in the processing of antigenic peptides during MHC class II-mediated antigen presentation. May play a role in activation-induced lymphocyte depletion in the thymus, and in neuronal degeneration and glial cell activation in the brain. The polypeptide is Cathepsin E (CTSE) (Homo sapiens (Human)).